The primary structure comprises 474 residues: Aromatic amino acid aminotransferase C56E4.03 (474 aa).

This sequence belongs to the class-I pyridoxal-phosphate-dependent aminotransferase family. Pyridoxal 5'-phosphate is required as a cofactor.

The protein localises to the cytoplasm. The enzyme catalyses an aromatic L-alpha-amino acid + 2-oxoglutarate = an aromatic oxo-acid + L-glutamate. Functionally, has aromatic amino acid transaminase activity. This Schizosaccharomyces pombe (strain 972 / ATCC 24843) (Fission yeast) protein is Aromatic amino acid aminotransferase C56E4.03.